Here is a 343-residue protein sequence, read N- to C-terminus: Protein RecA (343 aa).

Residue 66 to 73 (GPESSGKT) coordinates ATP.

The protein belongs to the RecA family.

The protein localises to the cytoplasm. Can catalyze the hydrolysis of ATP in the presence of single-stranded DNA, the ATP-dependent uptake of single-stranded DNA by duplex DNA, and the ATP-dependent hybridization of homologous single-stranded DNAs. It interacts with LexA causing its activation and leading to its autocatalytic cleavage. This is Protein RecA from Dechloromonas aromatica (strain RCB).